The primary structure comprises 873 residues: Cilia- and flagella-associated protein 58 (873 aa).

Coiled coils occupy residues 106–609 (VDSA…VISE) and 642–832 (ETQY…QKRK). A disordered region spans residues 202–221 (QEIQHRQNEASRESRKKEKL). Positions 204–221 (IQHRQNEASRESRKKEKL) are enriched in basic and acidic residues.

It belongs to the CFAP58 family. As to quaternary structure, interacts with ODFP2. In terms of tissue distribution, predominantly expressed in the testis. Also found at lower levels in ciliated cells and tissues such as neural progenitor cells and oviducts.

It localises to the cell projection. The protein resides in the cilium. It is found in the flagellum. The protein localises to the cytoplasm. Its subcellular location is the cytoskeleton. It localises to the microtubule organizing center. The protein resides in the centrosome. Its function is as follows. Has an essential role in the assembly and organization of the sperm flagellar axoneme. Required for the elongation of the primary cilium and sperm flagellar midpiece via modulation of the Notch signaling pathway. This is Cilia- and flagella-associated protein 58 from Mus musculus (Mouse).